A 255-amino-acid polypeptide reads, in one-letter code: MKKVVKVKDITIGEGMPKICIPILGETLEEIKEEAELLSTFDFDIVEWRADFFQFVEDMDCIKLAMEIIEENLGDKPMIFTLRSLKEGGKREVCEALYFEINRRVLETKNLDILDIELFHDKDEIESLINLAHKNGAKVIISNHDFQQTPSKDEILSRMNRAAQLGADIVKIAVMANDTEDVITVLDATRILKEDYLKIPLIAIAMGKKGMITRFAGEIFGSDITFATAKKTSAPGQLSVEDVKNIVQFIHKHTI.

Residues 47–49 (EWR) and R83 contribute to the 3-dehydroquinate site. H144 functions as the Proton donor/acceptor in the catalytic mechanism. K171 functions as the Schiff-base intermediate with substrate in the catalytic mechanism. 3 residues coordinate 3-dehydroquinate: R214, S233, and Q237.

This sequence belongs to the type-I 3-dehydroquinase family. Homodimer.

The catalysed reaction is 3-dehydroquinate = 3-dehydroshikimate + H2O. It functions in the pathway metabolic intermediate biosynthesis; chorismate biosynthesis; chorismate from D-erythrose 4-phosphate and phosphoenolpyruvate: step 3/7. Involved in the third step of the chorismate pathway, which leads to the biosynthesis of aromatic amino acids. Catalyzes the cis-dehydration of 3-dehydroquinate (DHQ) and introduces the first double bond of the aromatic ring to yield 3-dehydroshikimate. In Alkaliphilus oremlandii (strain OhILAs) (Clostridium oremlandii (strain OhILAs)), this protein is 3-dehydroquinate dehydratase.